Here is a 262-residue protein sequence, read N- to C-terminus: Purine nucleoside phosphorylase SSP1584 (262 aa).

The Zn(2+) site is built by histidine 79, cysteine 124, and histidine 141.

It belongs to the purine nucleoside phosphorylase YfiH/LACC1 family. In terms of assembly, homodimer. It depends on Cu(2+) as a cofactor. The cofactor is Zn(2+).

The catalysed reaction is adenosine + phosphate = alpha-D-ribose 1-phosphate + adenine. The enzyme catalyses S-methyl-5'-thioadenosine + phosphate = 5-(methylsulfanyl)-alpha-D-ribose 1-phosphate + adenine. It carries out the reaction inosine + phosphate = alpha-D-ribose 1-phosphate + hypoxanthine. It catalyses the reaction adenosine + H2O + H(+) = inosine + NH4(+). In terms of biological role, purine nucleoside enzyme that catalyzes the phosphorolysis of adenosine and inosine nucleosides, yielding D-ribose 1-phosphate and the respective free bases, adenine and hypoxanthine. Also catalyzes the phosphorolysis of S-methyl-5'-thioadenosine into adenine and S-methyl-5-thio-alpha-D-ribose 1-phosphate. Also has adenosine deaminase activity. This Staphylococcus saprophyticus subsp. saprophyticus (strain ATCC 15305 / DSM 20229 / NCIMB 8711 / NCTC 7292 / S-41) protein is Purine nucleoside phosphorylase SSP1584.